The following is a 209-amino-acid chain: Redox-sensing transcriptional repressor Rex (209 aa).

The H-T-H motif DNA-binding region spans 16–55; it reads LYYRFIQNLSLSGKQRVSSAELSEAVKVDSATIRRDFSYF. Residue 90–95 coordinates NAD(+); sequence GVGNLG.

This sequence belongs to the transcriptional regulatory Rex family. In terms of assembly, homodimer.

Its subcellular location is the cytoplasm. Functionally, modulates transcription in response to changes in cellular NADH/NAD(+) redox state. This is Redox-sensing transcriptional repressor Rex from Bacillus anthracis (strain A0248).